Reading from the N-terminus, the 360-residue chain is Peptide chain release factor 1 (360 aa).

Glutamine 237 carries the N5-methylglutamine modification.

It belongs to the prokaryotic/mitochondrial release factor family. In terms of processing, methylated by PrmC. Methylation increases the termination efficiency of RF1.

It is found in the cytoplasm. Functionally, peptide chain release factor 1 directs the termination of translation in response to the peptide chain termination codons UAG and UAA. The chain is Peptide chain release factor 1 from Teredinibacter turnerae (strain ATCC 39867 / T7901).